We begin with the raw amino-acid sequence, 234 residues long: Enterobactin synthase component D (234 aa).

Positions 107, 109, and 152 each coordinate Mg(2+).

Belongs to the P-Pant transferase superfamily. EntD family. As to quaternary structure, entB, EntD, EntE, and EntF form a multienzyme complex called enterobactin synthase. It depends on Mg(2+) as a cofactor.

It is found in the membrane. It catalyses the reaction apo-[aryl-carrier protein] + CoA = holo-[aryl-carrier protein] + adenosine 3',5'-bisphosphate + H(+). It carries out the reaction apo-[peptidyl-carrier protein] + CoA = holo-[peptidyl-carrier protein] + adenosine 3',5'-bisphosphate + H(+). Its pathway is siderophore biosynthesis; enterobactin biosynthesis. Functionally, involved in the biosynthesis of the siderophore enterobactin (enterochelin), which is a macrocyclic trimeric lactone of N-(2,3-dihydroxybenzoyl)-serine. The serine trilactone serves as a scaffolding for the three catechol functionalities that provide hexadentate coordination for the tightly ligated iron(2+) atoms. Plays an essential role in the assembly of the enterobactin by catalyzing the transfer of the 4'-phosphopantetheine (Ppant) moiety from coenzyme A to the apo-domains of both EntB (ArCP domain) and EntF (PCP domain) to yield their holo-forms which make them competent for the activation of 2,3-dihydroxybenzoate (DHB) and L-serine, respectively. The chain is Enterobactin synthase component D from Salmonella typhimurium (strain LT2 / SGSC1412 / ATCC 700720).